Reading from the N-terminus, the 374-residue chain is uncharacterized protein (374 aa).

The first 21 residues, 1–21 (MSIISRVCIPCAVLLFAQLHA), serve as a signal peptide directing secretion. The Fibronectin type-III domain occupies 22–102 (KELVHVSQLK…ASASAWTSLS (81 aa)).

This is an uncharacterized protein from Treponema pallidum (strain Nichols).